Reading from the N-terminus, the 101-residue chain is Large ribosomal subunit protein uL23 (101 aa).

This sequence belongs to the universal ribosomal protein uL23 family. As to quaternary structure, part of the 50S ribosomal subunit. Contacts protein L29, and trigger factor when it is bound to the ribosome.

One of the early assembly proteins it binds 23S rRNA. One of the proteins that surrounds the polypeptide exit tunnel on the outside of the ribosome. Forms the main docking site for trigger factor binding to the ribosome. This chain is Large ribosomal subunit protein uL23, found in Corynebacterium kroppenstedtii (strain DSM 44385 / JCM 11950 / CIP 105744 / CCUG 35717).